The sequence spans 192 residues: Large ribosomal subunit protein uL6 (192 aa).

It belongs to the universal ribosomal protein uL6 family. As to quaternary structure, component of the large ribosomal subunit.

The protein localises to the cytoplasm. Component of the large ribosomal subunit. The ribosome is a large ribonucleoprotein complex responsible for the synthesis of proteins in the cell. This Ictalurus punctatus (Channel catfish) protein is Large ribosomal subunit protein uL6 (rpl9).